Consider the following 485-residue polypeptide: Forkhead box protein N3 (485 aa).

Residues 1-21 (MGPVMPPSKKPESPGISVSSG) are disordered. Ser83, Ser85, and Ser97 each carry phosphoserine. Residues 86 to 108 (PVQDLDDDTPPSPAHSDMPYDAR) are disordered. The segment at residues 114–210 (KPPYSFSCLI…QALKKTPYHS (97 aa)) is a DNA-binding region (fork-head). Residues 315–454 (RTESEPSCGS…DEEMKEAAGS (140 aa)) form a disordered region. Positions 338 to 359 (SSAKSSHARSTSPASDCVSSSS) are enriched in low complexity. Basic and acidic residues predominate over residues 382 to 404 (HESHSETEEDDRKCSPKEAKDAL). Residues 412–424 (QHKKRQHFAKARK) are compositionally biased toward basic residues. The residue at position 443 (Ser443) is a Phosphoserine.

In terms of assembly, interacts through its C-terminus with the C-terminus of SNW1/SKIP.

The protein resides in the nucleus. Functionally, acts as a transcriptional repressor. May be involved in DNA damage-inducible cell cycle arrests (checkpoints). This chain is Forkhead box protein N3 (FOXN3), found in Sus scrofa (Pig).